Here is a 633-residue protein sequence, read N- to C-terminus: DNA mismatch repair protein MutL (633 aa).

This sequence belongs to the DNA mismatch repair MutL/HexB family.

In terms of biological role, this protein is involved in the repair of mismatches in DNA. It is required for dam-dependent methyl-directed DNA mismatch repair. May act as a 'molecular matchmaker', a protein that promotes the formation of a stable complex between two or more DNA-binding proteins in an ATP-dependent manner without itself being part of a final effector complex. This Pseudomonas putida (strain W619) protein is DNA mismatch repair protein MutL.